A 106-amino-acid polypeptide reads, in one-letter code: MNNIRKGDEVIVLTGRDKKRRGTVLARVDADHVLVEGVNVVKKHVKANPMANNPGGIVEKTMPIHVSNVALFNPATGKGDRVGVQEVDGRKVRVFRSNGAVVGAKA.

It belongs to the universal ribosomal protein uL24 family. In terms of assembly, part of the 50S ribosomal subunit.

In terms of biological role, one of two assembly initiator proteins, it binds directly to the 5'-end of the 23S rRNA, where it nucleates assembly of the 50S subunit. Functionally, one of the proteins that surrounds the polypeptide exit tunnel on the outside of the subunit. The polypeptide is Large ribosomal subunit protein uL24 (Bordetella bronchiseptica (strain ATCC BAA-588 / NCTC 13252 / RB50) (Alcaligenes bronchisepticus)).